The following is a 297-amino-acid chain: Giardin subunit alpha-6 (297 aa).

Annexin repeat units follow at residues 3 to 72 (TTVQ…AYLW), 74 to 146 (KPGD…HWIL), 153 to 222 (FDID…AAHY), and 226 to 295 (HPAR…ILWR).

This sequence belongs to the annexin family. Giardin subunit alpha subfamily.

It is found in the cytoplasm. The protein localises to the cytoskeleton. Giardins are involved in parasite attachment to the intestinal mucosa and in the cytoskeletal disassembly and reassembly that marks the transition from infectious trophozoite to transmissible cyst. They may interact with other cytoskeletal proteins such as microtubules in the microribbons or crossbridges, to maintain the integrity of the ventral disk. This Giardia intestinalis (Giardia lamblia) protein is Giardin subunit alpha-6.